Consider the following 787-residue polypeptide: Aconitate hydratase, mitochondrial (787 aa).

The N-terminal 33 residues, 1-33 (MISTRLARAGALAPKSRLFLGTRAFATVGDSPL), are a transit peptide targeting the mitochondrion. Residues Gln104 and 197–199 (DSH) each bind substrate. [4Fe-4S] cluster-binding residues include Cys390, Cys453, and Cys456. Residues Arg479 and Arg484 each contribute to the substrate site. A disordered region spans residues 529–559 (LQPPTGEGLPAKGYDPGRDTYQAPPADRSSV). Substrate contacts are provided by residues Arg612 and 675–676 (SR).

It belongs to the aconitase/IPM isomerase family. Requires [4Fe-4S] cluster as cofactor.

It is found in the mitochondrion. The catalysed reaction is citrate = D-threo-isocitrate. It carries out the reaction (2R)-homocitrate = cis-homoaconitate + H2O. It functions in the pathway carbohydrate metabolism; tricarboxylic acid cycle; isocitrate from oxaloacetate: step 2/2. The protein operates within amino-acid biosynthesis; L-lysine biosynthesis via AAA pathway; L-alpha-aminoadipate from 2-oxoglutarate: step 2/5. In terms of biological role, catalyzes the isomerization of citrate to isocitrate via cis-aconitate, a step in the citric acid cycle. Also catalyzes the reversible dehydration of (R)-homocitrate to cis-homoaconitate, a step in the alpha-aminoadipate pathway for lysine biosynthesis. The protein is Aconitate hydratase, mitochondrial (acoA) of Aspergillus fumigatus (strain ATCC MYA-4609 / CBS 101355 / FGSC A1100 / Af293) (Neosartorya fumigata).